The chain runs to 580 residues: Glutamine--tRNA ligase (580 aa).

Positions 41–51 (PEPNGYLHIGH) match the 'HIGH' region motif. Residues 42 to 44 (EPN) and 48 to 54 (HIGHAKA) contribute to the ATP site. L-glutamine is bound by residues Asp74 and Tyr218. Residues Thr237, 285-286 (RL), and 293-295 (MSK) contribute to the ATP site. The 'KMSKS' region motif lies at 292-296 (VMSKR).

The protein belongs to the class-I aminoacyl-tRNA synthetase family. In terms of assembly, monomer.

Its subcellular location is the cytoplasm. The enzyme catalyses tRNA(Gln) + L-glutamine + ATP = L-glutaminyl-tRNA(Gln) + AMP + diphosphate. This chain is Glutamine--tRNA ligase, found in Xylella fastidiosa (strain M12).